Reading from the N-terminus, the 208-residue chain is Uracil phosphoribosyltransferase (208 aa).

5-phospho-alpha-D-ribose 1-diphosphate contacts are provided by residues Arg-78, Arg-103, and 130–138 (DPMLATGGS). Residues Ile-193 and 198-200 (GDA) contribute to the uracil site. Asp-199 lines the 5-phospho-alpha-D-ribose 1-diphosphate pocket.

It belongs to the UPRTase family. The cofactor is Mg(2+).

The enzyme catalyses UMP + diphosphate = 5-phospho-alpha-D-ribose 1-diphosphate + uracil. It participates in pyrimidine metabolism; UMP biosynthesis via salvage pathway; UMP from uracil: step 1/1. With respect to regulation, allosterically activated by GTP. In terms of biological role, catalyzes the conversion of uracil and 5-phospho-alpha-D-ribose 1-diphosphate (PRPP) to UMP and diphosphate. This is Uracil phosphoribosyltransferase from Shewanella sp. (strain ANA-3).